The chain runs to 343 residues: MPEDELEDLPGVGPATSDKLVDAGFESYQAIAVASPAEMSNTADVGESTASDIINAARDAADVGGFETGAAVLQRREEIGKLSWKIPEVDELLGGGIETQSITEVYGEFGAGKSQVTHQMAVNVQLPPEHGGLGGAAIFVDSEDTFRPERIDDMLRGLDDEIITDLLERREIEGTPGDDETMKALLDSFLDHIHVAKAFNSNHQILLAEKAKELARDNQDSGFPVRLLCVDSLTAHFRAEYVGRGSLAERQQKLNKHLHDLMRIGDLYNTAVLVTNQVASNPDSYFGDPTQPIGGNILGHTSTFRMYLRKSKNDKRIVRLVDAPNLADGEAVMRVKDAGLKPE.

107–114 lines the ATP pocket; it reads GEFGAGKS.

It belongs to the eukaryotic RecA-like protein family.

Its function is as follows. Involved in DNA repair and in homologous recombination. Binds and assemble on single-stranded DNA to form a nucleoprotein filament. Hydrolyzes ATP in a ssDNA-dependent manner and promotes DNA strand exchange between homologous DNA molecules. The polypeptide is DNA repair and recombination protein RadA (Haloquadratum walsbyi (strain DSM 16790 / HBSQ001)).